Consider the following 252-residue polypeptide: MSVISMKQLLEAGVHFGHQTRRWNPKMAEYIFTERNGIYIIDLQKTVKKVEEAYYFLREVAMNGQGVLFVGTKKQAQDSIREEAQRADQYYVNARWLGGMLTNFKTIKGRINRLKELTKMEEEGVFDVLPKKEVTKLRAEKEKLEKYLGGIKEMKELPGALFVVDPRKERIAVLEARRLGIPVVAIVDTNCDPDEVDYVIPGNDDAIRAVKLIASKMADAIIEGRQGEQLSVESTAQEQVEETAQEETAVEA.

The disordered stretch occupies residues Ser-231–Ala-252. Over residues Gln-239–Ala-252 the composition is skewed to acidic residues.

Belongs to the universal ribosomal protein uS2 family.

The sequence is that of Small ribosomal subunit protein uS2 from Acetivibrio thermocellus (strain ATCC 27405 / DSM 1237 / JCM 9322 / NBRC 103400 / NCIMB 10682 / NRRL B-4536 / VPI 7372) (Clostridium thermocellum).